Here is an 894-residue protein sequence, read N- to C-terminus: Valine--tRNA ligase (894 aa).

The span at 1–22 shows a compositional bias: polar residues; the sequence is MKSIQTPSKSHTNTKETPVMSQ. A disordered region spans residues 1-28; the sequence is MKSIQTPSKSHTNTKETPVMSQEETKGY. The 'HIGH' region signature appears at 69–79; sequence PNVTGSLHIGH. The short motif at 554-558 is the 'KMSKS' region element; it reads KMSKS. Lysine 557 contacts ATP. The stretch at 832–894 forms a coiled coil; the sequence is IISRLEKQQE…VKVELQGIKG (63 aa).

It belongs to the class-I aminoacyl-tRNA synthetase family. ValS type 1 subfamily. As to quaternary structure, monomer.

It is found in the cytoplasm. The catalysed reaction is tRNA(Val) + L-valine + ATP = L-valyl-tRNA(Val) + AMP + diphosphate. Its function is as follows. Catalyzes the attachment of valine to tRNA(Val). As ValRS can inadvertently accommodate and process structurally similar amino acids such as threonine, to avoid such errors, it has a 'posttransfer' editing activity that hydrolyzes mischarged Thr-tRNA(Val) in a tRNA-dependent manner. This chain is Valine--tRNA ligase, found in Wolinella succinogenes (strain ATCC 29543 / DSM 1740 / CCUG 13145 / JCM 31913 / LMG 7466 / NCTC 11488 / FDC 602W) (Vibrio succinogenes).